The chain runs to 928 residues: Tyrosine-protein phosphatase 3 (928 aa).

T75 carries the phosphothreonine modification. Positions 111-232 (PDEKVLLLDV…FKILFPDHIN (122 aa)) constitute a Rhodanese domain. Residues 247–307 (KSPKTNLMNS…PRNVLSDSPM (61 aa)) form a disordered region. Phosphoserine is present on S248. 2 stretches are compositionally biased toward polar residues: residues 249 to 259 (PKTNLMNSLHN) and 265 to 275 (TATTPLSSPQM). Positions 280-289 (KVPDDSRSDH) are enriched in basic and acidic residues. A compositionally biased stretch (low complexity) spans 290–307 (SNFSSSPSPRNVLSDSPM). 2 positions are modified to phosphoserine: S297 and S368. Disordered stretches follow at residues 467 to 487 (LTST…NKVQ) and 672 to 713 (MRKN…NNNN). Positions 502–878 (YKSMLSLESD…IFIYDCLLFY (377 aa)) constitute a Tyrosine-protein phosphatase domain. The segment covering 672–691 (MRKNTMGTQNSSLYSAGVQG) has biased composition (polar residues). Residues 692 to 713 (NSSNYSTDNDNDNDNNNNNNNN) show a composition bias toward low complexity. The active-site Phosphocysteine intermediate is the C804.

This sequence belongs to the protein-tyrosine phosphatase family. Non-receptor class subfamily. As to quaternary structure, interacts with HOG1.

The protein localises to the cytoplasm. It catalyses the reaction O-phospho-L-tyrosyl-[protein] + H2O = L-tyrosyl-[protein] + phosphate. Functionally, major phosphatase responsible for tyrosine dephosphorylation of MAP kinases FUS3 and HOG1 to inactivate their activity; it also has important roles, along with MSG5, in the inactivation of FUS3 following pheromone stimulation. The chain is Tyrosine-protein phosphatase 3 (PTP3) from Saccharomyces cerevisiae (strain ATCC 204508 / S288c) (Baker's yeast).